The chain runs to 319 residues: tRNA dimethylallyltransferase (319 aa).

ATP is bound at residue 9–16 (GPTAVGKS). Residue 11-16 (TAVGKS) coordinates substrate. The interval 39-42 (DSMQ) is interaction with substrate tRNA.

It belongs to the IPP transferase family. As to quaternary structure, monomer. Requires Mg(2+) as cofactor.

It catalyses the reaction adenosine(37) in tRNA + dimethylallyl diphosphate = N(6)-dimethylallyladenosine(37) in tRNA + diphosphate. In terms of biological role, catalyzes the transfer of a dimethylallyl group onto the adenine at position 37 in tRNAs that read codons beginning with uridine, leading to the formation of N6-(dimethylallyl)adenosine (i(6)A). The polypeptide is tRNA dimethylallyltransferase (Thermobifida fusca (strain YX)).